The sequence spans 201 residues: Oligoribonuclease (201 aa).

An Exonuclease domain is found at methionine 5–leucine 169. Residue tyrosine 126 is part of the active site.

Belongs to the oligoribonuclease family.

It is found in the cytoplasm. 3'-to-5' exoribonuclease specific for small oligoribonucleotides. The sequence is that of Oligoribonuclease from Streptomyces griseus.